The following is a 206-amino-acid chain: Holliday junction branch migration complex subunit RuvA (206 aa).

Positions 1–68 are domain I; it reads MITFVRGMLA…EDAMQLFGFL (68 aa). Residues 69 to 147 form a domain II region; sequence EPGERELFGQ…KWREESGLSA (79 aa). Residues 147 to 151 are flexible linker; the sequence is AMGAR. The domain III stretch occupies residues 152 to 206; the sequence is ASSRVYEEVELALLALGFAPGEVVRALDAVAPAMAGEEQTEAWLRAAIAWLSEQG.

The protein belongs to the RuvA family. As to quaternary structure, homotetramer. Forms an RuvA(8)-RuvB(12)-Holliday junction (HJ) complex. HJ DNA is sandwiched between 2 RuvA tetramers; dsDNA enters through RuvA and exits via RuvB. An RuvB hexamer assembles on each DNA strand where it exits the tetramer. Each RuvB hexamer is contacted by two RuvA subunits (via domain III) on 2 adjacent RuvB subunits; this complex drives branch migration. In the full resolvosome a probable DNA-RuvA(4)-RuvB(12)-RuvC(2) complex forms which resolves the HJ.

Its subcellular location is the cytoplasm. In terms of biological role, the RuvA-RuvB-RuvC complex processes Holliday junction (HJ) DNA during genetic recombination and DNA repair, while the RuvA-RuvB complex plays an important role in the rescue of blocked DNA replication forks via replication fork reversal (RFR). RuvA specifically binds to HJ cruciform DNA, conferring on it an open structure. The RuvB hexamer acts as an ATP-dependent pump, pulling dsDNA into and through the RuvAB complex. HJ branch migration allows RuvC to scan DNA until it finds its consensus sequence, where it cleaves and resolves the cruciform DNA. The chain is Holliday junction branch migration complex subunit RuvA from Gloeobacter violaceus (strain ATCC 29082 / PCC 7421).